Reading from the N-terminus, the 62-residue chain is Large ribosomal subunit protein bL28 (62 aa).

The protein belongs to the bacterial ribosomal protein bL28 family.

In Parafrankia sp. (strain EAN1pec), this protein is Large ribosomal subunit protein bL28.